The sequence spans 396 residues: Elongation factor Tu (396 aa).

In terms of domain architecture, tr-type G spans 10–206; it reads KPHVNVGTIG…TLDEYIPEPE (197 aa). The segment at 19 to 26 is G1; the sequence is GHVDHGKT. GTP is bound at residue 19–26; sequence GHVDHGKT. T26 lines the Mg(2+) pocket. The tract at residues 60–64 is G2; it reads GITIA. The G3 stretch occupies residues 81–84; sequence DCPG. Residues 81-85 and 136-139 each bind GTP; these read DCPGH and NKAD. Positions 136–139 are G4; sequence NKAD. The segment at 174–176 is G5; that stretch reads SAL.

It belongs to the TRAFAC class translation factor GTPase superfamily. Classic translation factor GTPase family. EF-Tu/EF-1A subfamily. In terms of assembly, monomer.

It is found in the cytoplasm. It carries out the reaction GTP + H2O = GDP + phosphate + H(+). In terms of biological role, GTP hydrolase that promotes the GTP-dependent binding of aminoacyl-tRNA to the A-site of ribosomes during protein biosynthesis. This chain is Elongation factor Tu, found in Alcanivorax borkumensis (strain ATCC 700651 / DSM 11573 / NCIMB 13689 / SK2).